The chain runs to 378 residues: Ribosomal RNA large subunit methyltransferase G (378 aa).

It belongs to the methyltransferase superfamily. RlmG family.

It is found in the cytoplasm. It carries out the reaction guanosine(1835) in 23S rRNA + S-adenosyl-L-methionine = N(2)-methylguanosine(1835) in 23S rRNA + S-adenosyl-L-homocysteine + H(+). Its function is as follows. Specifically methylates the guanine in position 1835 (m2G1835) of 23S rRNA. This chain is Ribosomal RNA large subunit methyltransferase G, found in Salmonella dublin (strain CT_02021853).